The following is a 638-amino-acid chain: Epithelial sodium channel subunit beta (638 aa).

The Cytoplasmic segment spans residues 1–50 (MPVKKYLLKCLHRLQKGPGYTYKELLVWYCNNTNTHGPKRIICEGPKKKA). Residues 51–71 (MWFLLTLLFACLVCWQWGVFI) form a helical membrane-spanning segment. Residues 72 to 530 (QTYLSWEVSV…GGQFGFWMGG (459 aa)) are Extracellular-facing. Intrachain disulfides connect Cys-98-Cys-270, Cys-182-Cys-187, Cys-194-Cys-201, Cys-247-Cys-254, Cys-359-Cys-446, Cys-384-Cys-442, Cys-388-Cys-438, Cys-397-Cys-424, and Cys-399-Cys-413. N-linked (GlcNAc...) asparagine glycans are attached at residues Asn-135 and Asn-141. Residues 531-551 (SVLCLIEFGEIIIDFIWITVI) traverse the membrane as a helical segment. Residues 552–638 (KLVASCKGLR…MESDSEVEAI (87 aa)) are Cytoplasmic-facing. The segment at 598 to 620 (NAEVYPDQQTLPIPGTPPPNYDS) is disordered. The PY motif; recruits WW domain-containing proteins and is thereby required for ubiquitination and inhibition of the channel by NEDD4 and NEDD4L signature appears at 614–618 (PPPNY). Phosphoserine occurs at positions 631 and 633.

Belongs to the amiloride-sensitive sodium channel (TC 1.A.6) family. SCNN1B subfamily. As to quaternary structure, component of the heterotrimeric epithelial sodium channel (ENaC) composed of an alpha/SCNN1A, a beta/SCNN1B and a gamma/SCNN1G subunit. Interacts with WWP1 (via WW domains). Interacts with WWP2 (via WW domains). Interacts with the full-length immature form of PCSK9 (pro-PCSK9). Interacts (N-glycosylated) with BPIFA1; the interaction is direct and inhibits the proteolytic processing of SCNN1A and SCNN1G and the activation of ENaC. Post-translationally, ubiquitinated. Can be ubiquitinated at multiple sites and undergo monoubiquitination and polyubiquitination. Ubiquitination by NEDD4 or NEDD4L inhibits the ENaC channel through endocytosis, intracellular retention and degradation of its individual subunits. However, some studies could not confirm the ubiquitination of this subunit of the ENaC. In terms of processing, N-glycosylated. N-glycosylation is required for interaction with BPIFA1. Phosphorylated on serine and threonine residues. Aldosterone and insulin increase the basal level of phosphorylation. As to expression, expressed in lung and epididymis. In the caput region of the epididymis, expressed at the luminal and basolateral surfaces of the ducts and in the smooth muscle coat. In the caudal region of the epididymis, expressed along the luminal border but not continuously, in the smooth muscle coat, in the interstitial muscle tissue and in sperm in the caudal lumen.

It is found in the apical cell membrane. The protein resides in the cytoplasmic vesicle membrane. The enzyme catalyses Na(+)(in) = Na(+)(out). Originally identified and characterized by its inhibition by the diuretic drug amiloride. In terms of biological role, this is one of the three pore-forming subunits of the heterotrimeric epithelial sodium channel (ENaC), a critical regulator of sodium balance and fluid homeostasis. ENaC operates in epithelial tissues, where it mediates the electrodiffusion of sodium ions from extracellular fluid through the apical membrane of cells, with water following osmotically. It plays a key role in maintaining sodium homeostasis through electrogenic sodium reabsorption in the kidneys. This subunit is not essential for ENaC function in airway surface liquid homeostasis and proper mucus clearance. The protein is Epithelial sodium channel subunit beta of Rattus norvegicus (Rat).